Reading from the N-terminus, the 147-residue chain is Large ribosomal subunit protein bL9 (147 aa).

This sequence belongs to the bacterial ribosomal protein bL9 family.

Functionally, binds to the 23S rRNA. In Mycoplasmoides gallisepticum (strain R(low / passage 15 / clone 2)) (Mycoplasma gallisepticum), this protein is Large ribosomal subunit protein bL9.